Consider the following 20-residue polypeptide: ARCENFADSYRQPPISSSQT.

The disordered stretch occupies residues A1 to T20.

In terms of biological role, has antifungal activity against B.cinerea, F.oxysporum and M.arachidicola. Inhibits cell-free translation in rabbit reticulocyte lysate system. This is Cicerin from Cicer arietinum (Chickpea).